A 257-amino-acid chain; its full sequence is BTB/POZ domain-containing protein KCTD1 (257 aa).

Residues 1–25 (MSRPLITRSPASPLNNQGIPTPAQL) are disordered. Phosphoserine occurs at positions 9 and 12. Positions 9 to 25 (SPASPLNNQGIPTPAQL) are enriched in polar residues. The region spanning 30–100 (APVHIDVGGH…LRTSKLLIPD (71 aa)) is the BTB domain.

In terms of assembly, forms homopentamers. Interacts with KCTD15, probably forming heteropentamers depending on its abundance in a cell-type dependent manner. Interacts with TFAP2A, TFAP2B and TFAP2C via the BTB domain. In terms of processing, sumoylated. In terms of tissue distribution, expressed in mammary gland, kidney, brain and ovary.

The protein localises to the nucleus. Functionally, may repress the transcriptional activity of AP-2 family members, including TFAP2A, TFAP2B and TFAP2C to various extent. This is BTB/POZ domain-containing protein KCTD1 (KCTD1) from Homo sapiens (Human).